A 122-amino-acid polypeptide reads, in one-letter code: UPF0102 protein XOO3839 (122 aa).

The protein belongs to the UPF0102 family.

This is UPF0102 protein XOO3839 from Xanthomonas oryzae pv. oryzae (strain KACC10331 / KXO85).